A 160-amino-acid chain; its full sequence is Ureidoglycolate lyase (160 aa).

Belongs to the ureidoglycolate lyase family. In terms of assembly, homodimer. The cofactor is Ni(2+).

It catalyses the reaction (S)-ureidoglycolate = urea + glyoxylate. It participates in nitrogen metabolism; (S)-allantoin degradation. Catalyzes the catabolism of the allantoin degradation intermediate (S)-ureidoglycolate, generating urea and glyoxylate. Involved in the anaerobic utilization of allantoin as sole nitrogen source. Reinforces the induction of genes involved in the degradation of allantoin and glyoxylate by producing glyoxylate. The protein is Ureidoglycolate lyase of Escherichia coli O6:H1 (strain CFT073 / ATCC 700928 / UPEC).